Here is a 263-residue protein sequence, read N- to C-terminus: Endonuclease 8 (263 aa).

Pro-2 (schiff-base intermediate with DNA) is an active-site residue. The active-site Proton donor is the Glu-3. Lys-53 functions as the Proton donor; for beta-elimination activity in the catalytic mechanism. Positions 70, 125, and 169 each coordinate DNA. The FPG-type zinc-finger motif lies at 229-263; that stretch reads KVFHRDGELCERCGGIIEKTTLSSRPFYWCPGCQH. The Proton donor; for delta-elimination activity role is filled by Arg-253.

Belongs to the FPG family. The cofactor is Zn(2+).

It carries out the reaction 2'-deoxyribonucleotide-(2'-deoxyribose 5'-phosphate)-2'-deoxyribonucleotide-DNA = a 3'-end 2'-deoxyribonucleotide-(2,3-dehydro-2,3-deoxyribose 5'-phosphate)-DNA + a 5'-end 5'-phospho-2'-deoxyribonucleoside-DNA + H(+). In terms of biological role, involved in base excision repair of DNA damaged by oxidation or by mutagenic agents. Acts as a DNA glycosylase that recognizes and removes damaged bases. Has a preference for oxidized pyrimidines, such as thymine glycol, 5,6-dihydrouracil and 5,6-dihydrothymine. Has AP (apurinic/apyrimidinic) lyase activity and introduces nicks in the DNA strand. Cleaves the DNA backbone by beta-delta elimination to generate a single-strand break at the site of the removed base with both 3'- and 5'-phosphates. The polypeptide is Endonuclease 8 (Escherichia coli (strain SE11)).